The primary structure comprises 341 residues: Elongation factor Ts (341 aa).

The involved in Mg(2+) ion dislocation from EF-Tu stretch occupies residues 80–83; that stretch reads TDFV.

This sequence belongs to the EF-Ts family.

It is found in the cytoplasm. In terms of biological role, associates with the EF-Tu.GDP complex and induces the exchange of GDP to GTP. It remains bound to the aminoacyl-tRNA.EF-Tu.GTP complex up to the GTP hydrolysis stage on the ribosome. The polypeptide is Elongation factor Ts (Lactobacillus acidophilus (strain ATCC 700396 / NCK56 / N2 / NCFM)).